A 68-amino-acid chain; its full sequence is Putative protein YfaH (68 aa).

In Escherichia coli (strain K12), this protein is Putative protein YfaH (yfaH).